The following is a 154-amino-acid chain: Myoglobin (154 aa).

The region spanning 2–148 is the Globin domain; it reads GLSDGEWQLV…FRKDIAAKYK (147 aa). Residue S4 is modified to Phosphoserine. Residue H65 participates in nitrite binding. Position 65 (H65) interacts with O2. At T68 the chain carries Phosphothreonine. Residue H94 participates in heme b binding.

It belongs to the globin family. Monomeric.

Its subcellular location is the cytoplasm. The protein resides in the sarcoplasm. The catalysed reaction is Fe(III)-heme b-[protein] + nitric oxide + H2O = Fe(II)-heme b-[protein] + nitrite + 2 H(+). It carries out the reaction H2O2 + AH2 = A + 2 H2O. Monomeric heme protein which primary function is to store oxygen and facilitate its diffusion within muscle tissues. Reversibly binds oxygen through a pentacoordinated heme iron and enables its timely and efficient release as needed during periods of heightened demand. Depending on the oxidative conditions of tissues and cells, and in addition to its ability to bind oxygen, it also has a nitrite reductase activity whereby it regulates the production of bioactive nitric oxide. Under stress conditions, like hypoxia and anoxia, it also protects cells against reactive oxygen species thanks to its pseudoperoxidase activity. The polypeptide is Myoglobin (MB) (Delphinus delphis (Short-beaked common dolphin)).